The sequence spans 563 residues: Grainyhead-like protein 1 homolog (563 aa).

Residues 194–428 (NNLGFQYVLE…ELDKPAALFI (235 aa)) form the Grh/CP2 DB domain. 2 interaction with DNA regions span residues 326–335 (TDFSTQKGVK) and 372–375 (RKLR). The segment at 377 to 405 (EDKRAQKRKVQEYTAGALPGGRKKSDGEY) is disordered.

This sequence belongs to the grh/CP2 family. Grainyhead subfamily.

Its subcellular location is the nucleus. Its function is as follows. Probable transcription factor. Binds a motif with the core sequence 5'-C[ACT][TG]G-3' in regulatory elements of target genes. Many putative target genes show oscillating expression levels, perhaps as a result of rhythmic variation in accumulation of grh-1. Plays a role in proper cuticle formation and/or barrier function and is required repetitively during development, for successful completion of each molt. Involved in modulating lifespan. Plays a role in defense response to bacteria. May act upstream of the p38 MAP kinase / pmk-1 pathway. May act downstream of the insulin/IGF-1 receptor signaling (IIS) pathway. The chain is Grainyhead-like protein 1 homolog from Caenorhabditis elegans.